A 309-amino-acid polypeptide reads, in one-letter code: Serine/threonine-protein phosphatase 2A catalytic subunit beta isoform (309 aa).

Positions 57, 59, 85, and 117 each coordinate Mn(2+). His118 serves as the catalytic Proton donor. His167 and His241 together coordinate Mn(2+). Tyr307 is subject to Phosphotyrosine. Position 309 is a leucine methyl ester (Leu309).

It belongs to the PPP phosphatase family. PP-1 subfamily. As to quaternary structure, PP2A consists of a common heterodimeric core enzyme (composed of a 36 kDa catalytic subunit (subunit C) and a 65 kDa constant regulatory subunit (PR65) (subunit A)) that associates with a variety of regulatory subunits. Proteins that associate with the core dimer include three families of regulatory subunits B (the R2/B/PR55/B55, R3/B''/PR72/PR130/PR59 and R5/B'/B56 families), the 48 kDa variable regulatory subunit, viral proteins, and cell signaling molecules. Binds PPME1. May indirectly interact with SGO1, most probably through regulatory B56 subunits. Found in a complex with at least ARL2, PPP2CB, PPP2R1A, PPP2R2A, PPP2R5E and TBCD. Interacts with TBCD. Interacts with CTTNBP2NL. Interacts with PTPA. Part of the core of STRIPAK complexes composed of PP2A catalytic and scaffolding subunits, the striatins (PP2A regulatory subunits), the striatin-associated proteins MOB4, STRIP1 and STRIP2, PDCD10 and members of the STE20 kinases, such as STK24 and STK26. Mn(2+) serves as cofactor. Post-translationally, reversibly methyl esterified on Leu-309 by leucine carboxyl methyltransferase 1 (LCMT1) and protein phosphatase methylesterase 1 (PPME1). Carboxyl methylation influences the affinity of the catalytic subunit for the different regulatory subunits, thereby modulating the PP2A holoenzyme's substrate specificity, enzyme activity and cellular localization. Phosphorylation of either threonine (by autophosphorylation-activated protein kinase) or tyrosine results in inactivation of the phosphatase. Auto-dephosphorylation has been suggested as a mechanism for reactivation. In terms of processing, may be monoubiquitinated by NOSIP.

It is found in the cytoplasm. The protein resides in the nucleus. It localises to the chromosome. The protein localises to the centromere. Its subcellular location is the cytoskeleton. It is found in the spindle pole. The catalysed reaction is O-phospho-L-seryl-[protein] + H2O = L-seryl-[protein] + phosphate. The enzyme catalyses O-phospho-L-threonyl-[protein] + H2O = L-threonyl-[protein] + phosphate. Catalytic subunit of protein phosphatase 2A (PP2A), a serine/threonine phosphatase involved in the regulation of a wide variety of enzymes, signal transduction pathways, and cellular events. PP2A can modulate the activity of phosphorylase B kinase, casein kinase 2, mitogen-stimulated S6 kinase, and MAP-2 kinase. Part of the striatin-interacting phosphatase and kinase (STRIPAK) complexes. STRIPAK complexes have critical roles in protein (de)phosphorylation and are regulators of multiple signaling pathways including Hippo, MAPK, nuclear receptor and cytoskeleton remodeling. Different types of STRIPAK complexes are involved in a variety of biological processes such as cell growth, differentiation, apoptosis, metabolism and immune regulation. This is Serine/threonine-protein phosphatase 2A catalytic subunit beta isoform (PPP2CB) from Bos taurus (Bovine).